We begin with the raw amino-acid sequence, 65 residues long: Weak toxin CM-10 (65 aa).

Intrachain disulfides connect Cys3–Cys24, Cys6–Cys11, Cys17–Cys42, Cys46–Cys57, and Cys58–Cys63.

It belongs to the three-finger toxin family. Ancestral subfamily. Orphan group II sub-subfamily. As to expression, expressed by the venom gland.

The protein localises to the secreted. Binds with low affinity to muscular (alpha-1-beta-1-delta-epsilon/CHRNA1-CHRNB1-CHRND-CHRNE) and very low affinity to neuronal (alpha-7/CHRNA7) nicotinic acetylcholine receptor (nAChR). The polypeptide is Weak toxin CM-10 (Naja nivea (Cape cobra)).